Consider the following 408-residue polypeptide: DNA primase DnaG (408 aa).

Residues 165–243 enclose the Toprim domain; that stretch reads PELIIVEGRA…KIDYVARAPT (79 aa). Mg(2+) is bound by residues E171, D216, and D218.

Belongs to the archaeal DnaG primase family. As to quaternary structure, forms a ternary complex with MCM helicase and DNA. Component of the archaeal exosome complex. The cofactor is Mg(2+).

The enzyme catalyses ssDNA + n NTP = ssDNA/pppN(pN)n-1 hybrid + (n-1) diphosphate.. In terms of biological role, RNA polymerase that catalyzes the synthesis of short RNA molecules used as primers for DNA polymerase during DNA replication. Also part of the exosome, which is a complex involved in RNA degradation. Acts as a poly(A)-binding protein that enhances the interaction between heteromeric, adenine-rich transcripts and the exosome. This is DNA primase DnaG from Sulfurisphaera tokodaii (strain DSM 16993 / JCM 10545 / NBRC 100140 / 7) (Sulfolobus tokodaii).